The following is a 536-amino-acid chain: Carboxypeptidase Y homolog A (536 aa).

The first 17 residues, 1–17, serve as a signal peptide directing secretion; sequence MKFFTTGLLATAALAAA. The propeptide occupies 18-124; it reads QEQQVLQAED…KLHNYDLRVK (107 aa). 5 cysteine pairs are disulfide-bonded: cysteine 172–cysteine 412, cysteine 306–cysteine 320, cysteine 330–cysteine 353, cysteine 337–cysteine 346, and cysteine 375–cysteine 382. The N-linked (GlcNAc...) asparagine glycan is linked to asparagine 203. Serine 259 is an active-site residue. The active site involves aspartate 451. A glycan (N-linked (GlcNAc...) asparagine) is linked at asparagine 502. The active site involves histidine 513.

Belongs to the peptidase S10 family.

Its subcellular location is the vacuole. It carries out the reaction Release of a C-terminal amino acid with broad specificity.. Its function is as follows. Vacuolar carboxypeptidase involved in degradation of small peptides. Digests preferentially peptides containing an aliphatic or hydrophobic residue in P1' position, as well as methionine, leucine or phenylalanine in P1 position of ester substrate. The chain is Carboxypeptidase Y homolog A (cpyA) from Trichophyton rubrum (Athlete's foot fungus).